Here is a 155-residue protein sequence, read N- to C-terminus: Mediator of RNA polymerase II transcription subunit 21 (155 aa).

Residues 29-73 (QAPPSVPPGQHRVDTMPEIKGKAASENPQSNPPQPAEPPVPEKIS) form a disordered region. Positions 39 to 51 (HRVDTMPEIKGKA) are enriched in basic and acidic residues. A compositionally biased stretch (pro residues) spans 58-69 (SNPPQPAEPPVP). Positions 75 to 147 (EQFNQDLKEF…EVLLKKVEDK (73 aa)) form a coiled coil.

It belongs to the Mediator complex subunit 21 family. As to quaternary structure, component of the Mediator complex.

The protein resides in the nucleus. Its function is as follows. Component of the Mediator complex, a coactivator involved in the regulated transcription of nearly all RNA polymerase II-dependent genes. Mediator functions as a bridge to convey information from gene-specific regulatory proteins to the basal RNA polymerase II transcription machinery. Mediator is recruited to promoters by direct interactions with regulatory proteins and serves as a scaffold for the assembly of a functional preinitiation complex with RNA polymerase II and the general transcription factors. In Phaeosphaeria nodorum (strain SN15 / ATCC MYA-4574 / FGSC 10173) (Glume blotch fungus), this protein is Mediator of RNA polymerase II transcription subunit 21 (SRB7).